The sequence spans 360 residues: Cell division protein DivIB (360 aa).

Positions 1-54 are disordered; the sequence is MTEKDSNVEESVLEVEQASQVELDSEQISPAEKESVLAEEKEFSTDVDIPEMTA. Over 1–139 the chain is Cytoplasmic; the sequence is MTEKDSNVEE…VDIPSKVVWK (139 aa). Residues 17-28 are compositionally biased toward polar residues; that stretch reads QASQVELDSEQI. Residues 31 to 44 show a composition bias toward basic and acidic residues; sequence AEKESVLAEEKEFS. A helical membrane pass occupies residues 140 to 160; that stretch reads AIPVLVTSLLLAALALYFISP. At 161–360 the chain is on the extracellular side; it reads TSKKKQIEVV…MEVGIYRYAS (200 aa). The 72-residue stretch at 162-233 folds into the POTRA domain; sequence SKKKQIEVVG…ATFTIHIKEY (72 aa).

The protein belongs to the FtsQ/DivIB family. DivIB subfamily.

The protein localises to the cell membrane. Its function is as follows. Cell division protein that may be involved in stabilizing or promoting the assembly of the division complex. The protein is Cell division protein DivIB of Streptococcus suis (strain GZ1).